We begin with the raw amino-acid sequence, 476 residues long: PRAME family member 6 (476 aa).

Residues 97–124 (RWKLQVLDLQDVCENFWMVWSEAMARGC) form an LRR 1; degenerate repeat. An LRR 2; degenerate repeat occupies 179–203 (HLCCKKLKILGMPFRNIRSILKMVN). The LRR 3; degenerate repeat unit spans residues 204 to 230 (LDCIQEVEVNCKWVLPILTQFTPYLGH). The LRR 4; degenerate repeat unit spans residues 231–266 (MRNLQKLVLSHMDVSRYVSPEQKKEIVTQFTTQFLK). LRR repeat units lie at residues 267–292 (LCCLQKLSMNSVSFLEGHLDQLLSCL), 293–324 (KTSLKVLTITNCVLLESDLKHLSQCPSISQLK), 325–345 (TLDLSGIRLTNYSLVPLQILL), 349–376 (AATLEYLDLDDCGIIDSQVNAILPALSR), and 377–401 (CFELNTFSFCGNPISMATLENLLSH).

The protein belongs to the PRAME family. In terms of assembly, component of a CRL2 E3 ubiquitin-protein ligase complex, also named ECS (Elongin BC-CUL2/5-SOCS-box protein) complex, composed of CUL2, Elongin BC (ELOB and ELOC), RBX1 and substrate-specific adapter PRAMEF6.

The protein operates within protein modification; protein ubiquitination. Substrate-recognition component of a Cul2-RING (CRL2) E3 ubiquitin-protein ligase complex, which mediates ubiquitination of target proteins, leading to their degradation. The CRL2(PRAMEF6) complex mediates ubiquitination and degradation of truncated MSRB1/SEPX1 selenoproteins produced by failed UGA/Sec decoding. The chain is PRAME family member 6 from Homo sapiens (Human).